The chain runs to 548 residues: ETS domain-containing transcription factor ERF (548 aa).

Thr-3 and Thr-7 each carry phosphothreonine. Residues Ser-20 and Ser-24 each carry the phosphoserine modification. A DNA-binding region (ETS) is located at residues 27 to 107 (IQLWHFILEL…KGKRFTYKFN (81 aa)). Disordered regions lie at residues 130–169 (QSAP…SSSS), 184–225 (GSVS…LARL), and 280–304 (SPTL…SHFS). A phosphoserine mark is found at Ser-185 and Ser-190. Residues 289–301 (SGGGGPSGSGGGS) are compositionally biased toward gly residues. Ser-327 carries the post-translational modification Phosphoserine. Residues 342–478 (PQRPDKCPLP…GEAPGASQCM (137 aa)) form a disordered region. Pro residues predominate over residues 348 to 361 (CPLPPMAPETPPVP). 2 stretches are compositionally biased toward low complexity: residues 362–373 (SSASSSSSSSSS) and 394–403 (KAVAGADKSG). Ser-431 and Ser-435 each carry phosphoserine. The span at 431–451 (SEGESEEVEVTDISDEDEEDG) shows a compositional bias: acidic residues. Thr-441 carries the phosphothreonine modification. Position 444 is a phosphoserine (Ser-444). Glycyl lysine isopeptide (Lys-Gly) (interchain with G-Cter in SUMO2) cross-links involve residues Lys-465, Lys-481, and Lys-512. Residues 492-548 (CRLEGGGGPAGGFEDEGEDKKVRGEGPGEAGGPLTPRRVSSDLQHATAQLSLEHRDS) are disordered. A Phosphothreonine; by MAPK1 modification is found at Thr-526. Residues Ser-531, Ser-532, and Ser-548 each carry the phosphoserine modification. Over residues 532 to 541 (SDLQHATAQL) the composition is skewed to polar residues.

It belongs to the ETS family. Post-translationally, phosphorylated by multiple kinases including MAPK1/ERK2 at THR-526. Phosphorylation regulates the activity of ERF. As to expression, highest levels in testis, ovary, pancreas, and heart.

The protein localises to the nucleus. Functionally, potent transcriptional repressor that binds to the H1 element of the Ets2 promoter. May regulate other genes involved in cellular proliferation. Required for extraembryonic ectoderm differentiation, ectoplacental cone cavity closure, and chorioallantoic attachment. May be important for regulating trophoblast stem cell differentiation. The chain is ETS domain-containing transcription factor ERF (ERF) from Homo sapiens (Human).